Consider the following 447-residue polypeptide: N-succinylarginine dihydrolase (447 aa).

Substrate is bound by residues 19 to 28 (AGLSFGNEAS), Asn110, and 137 to 138 (HR). Glu174 is an active-site residue. Arg213 contributes to the substrate binding site. Residue His249 is part of the active site. Substrate-binding residues include Asp251 and Asn364. Cys370 serves as the catalytic Nucleophile.

The protein belongs to the succinylarginine dihydrolase family. In terms of assembly, homodimer.

It catalyses the reaction N(2)-succinyl-L-arginine + 2 H2O + 2 H(+) = N(2)-succinyl-L-ornithine + 2 NH4(+) + CO2. The protein operates within amino-acid degradation; L-arginine degradation via AST pathway; L-glutamate and succinate from L-arginine: step 2/5. Its function is as follows. Catalyzes the hydrolysis of N(2)-succinylarginine into N(2)-succinylornithine, ammonia and CO(2). The sequence is that of N-succinylarginine dihydrolase from Yersinia enterocolitica serotype O:8 / biotype 1B (strain NCTC 13174 / 8081).